A 1197-amino-acid polypeptide reads, in one-letter code: Disease resistance-like protein CSA1 (1197 aa).

The region spanning 15–178 (PQDQVFINFR…IIIRKVKEIL (164 aa)) is the TIR domain. Residue E89 is part of the active site. The NB-ARC domain occupies 210–480 (RIKQLEEKLR…ACFRSQDENY (271 aa)). LRR repeat units lie at residues 614–636 (LNEV…DFNP), 638–659 (NLVD…NKDA), 694–716 (TALK…NLRG), 728–749 (LISL…QVIS), 750–774 (DKLE…RLQR), 776–796 (VMLN…LGQL), 797–819 (KALE…TWGN), 820–843 (MSRL…LSVR), 845–862 (LCLN…LLNK), and 863–889 (FSQL…NLQY).

It carries out the reaction NAD(+) + H2O = ADP-D-ribose + nicotinamide + H(+). Its function is as follows. TIR-NB-LRR receptor-like protein that functions in photomorphogenic development. May function downstream of phytochrome B (phyB) signaling. The polypeptide is Disease resistance-like protein CSA1 (Arabidopsis thaliana (Mouse-ear cress)).